Reading from the N-terminus, the 505-residue chain is 2,3-bisphosphoglycerate-independent phosphoglycerate mutase (505 aa).

Residues Asp12 and Ser62 each coordinate Mn(2+). The active-site Phosphoserine intermediate is the Ser62. Residues His123, Arg153 to Asp154, Arg185, Arg191, Arg257 to Arg260, and Lys330 contribute to the substrate site. Asp397, His401, Asp438, His439, and His456 together coordinate Mn(2+).

This sequence belongs to the BPG-independent phosphoglycerate mutase family. As to quaternary structure, monomer. Requires Mn(2+) as cofactor.

The catalysed reaction is (2R)-2-phosphoglycerate = (2R)-3-phosphoglycerate. It functions in the pathway carbohydrate degradation; glycolysis; pyruvate from D-glyceraldehyde 3-phosphate: step 3/5. In terms of biological role, catalyzes the interconversion of 2-phosphoglycerate and 3-phosphoglycerate. The chain is 2,3-bisphosphoglycerate-independent phosphoglycerate mutase from Staphylococcus aureus (strain COL).